The sequence spans 470 residues: Coproporphyrinogen III oxidase (470 aa).

FAD-binding positions include 12–17 (GGGITG), 41–42 (EA), Lys49, 63–66 (GPDS), Val256, Trp409, and 448–450 (VGI).

The protein belongs to the protoporphyrinogen/coproporphyrinogen oxidase family. Coproporphyrinogen III oxidase subfamily. Monomer. The cofactor is FAD.

It localises to the cytoplasm. The protein resides in the cell membrane. The catalysed reaction is coproporphyrinogen III + 3 O2 = coproporphyrin III + 3 H2O2. It functions in the pathway porphyrin-containing compound metabolism; protoheme biosynthesis. Its activity is regulated as follows. Only weakly inhibited by acifluorfen, in contrast to eukaryotic family members. Weakly inhibited by methylacifluorfen. Bilirubin, biliverdin and hemin are all competitive inhibitors. Functionally, involved in coproporphyrin-dependent heme b biosynthesis. Catalyzes the oxidation of coproporphyrinogen III to coproporphyrin III. Can also oxidize protoporphyrinogen IX to protoporphyrin-IX. The specific activity for the oxidation of coproporphyrinogen III is much higher than that for the oxidation of protoporphyrinogen IX. Can also oxidize mesoporphyrinogen IX, but not uroporphyrinogen III. This is Coproporphyrinogen III oxidase from Bacillus subtilis (strain 168).